The chain runs to 112 residues: Large ribosomal subunit protein bL17 (112 aa).

This sequence belongs to the bacterial ribosomal protein bL17 family. Part of the 50S ribosomal subunit. Contacts protein L32.

The polypeptide is Large ribosomal subunit protein bL17 (Heliobacterium modesticaldum (strain ATCC 51547 / Ice1)).